A 97-amino-acid chain; its full sequence is Co-chaperonin GroES (97 aa).

It belongs to the GroES chaperonin family. In terms of assembly, heptamer of 7 subunits arranged in a ring. Interacts with the chaperonin GroEL.

It localises to the cytoplasm. Its function is as follows. Together with the chaperonin GroEL, plays an essential role in assisting protein folding. The GroEL-GroES system forms a nano-cage that allows encapsulation of the non-native substrate proteins and provides a physical environment optimized to promote and accelerate protein folding. GroES binds to the apical surface of the GroEL ring, thereby capping the opening of the GroEL channel. This chain is Co-chaperonin GroES, found in Wigglesworthia glossinidia brevipalpis.